We begin with the raw amino-acid sequence, 99 residues long: Large ribosomal subunit protein bL28 (99 aa).

It belongs to the bacterial ribosomal protein bL28 family.

This chain is Large ribosomal subunit protein bL28, found in Rhodospirillum rubrum (strain ATCC 11170 / ATH 1.1.1 / DSM 467 / LMG 4362 / NCIMB 8255 / S1).